A 423-amino-acid chain; its full sequence is Serine--tRNA ligase (423 aa).

Residue 230-232 (TAE) participates in L-serine binding. 261–263 (RSE) contributes to the ATP binding site. Glutamate 284 contacts L-serine. 348–351 (EISS) serves as a coordination point for ATP. An L-serine-binding site is contributed by serine 383.

It belongs to the class-II aminoacyl-tRNA synthetase family. Type-1 seryl-tRNA synthetase subfamily. As to quaternary structure, homodimer. The tRNA molecule binds across the dimer.

It is found in the cytoplasm. It catalyses the reaction tRNA(Ser) + L-serine + ATP = L-seryl-tRNA(Ser) + AMP + diphosphate + H(+). It carries out the reaction tRNA(Sec) + L-serine + ATP = L-seryl-tRNA(Sec) + AMP + diphosphate + H(+). It functions in the pathway aminoacyl-tRNA biosynthesis; selenocysteinyl-tRNA(Sec) biosynthesis; L-seryl-tRNA(Sec) from L-serine and tRNA(Sec): step 1/1. Functionally, catalyzes the attachment of serine to tRNA(Ser). Is also able to aminoacylate tRNA(Sec) with serine, to form the misacylated tRNA L-seryl-tRNA(Sec), which will be further converted into selenocysteinyl-tRNA(Sec). In Levilactobacillus brevis (strain ATCC 367 / BCRC 12310 / CIP 105137 / JCM 1170 / LMG 11437 / NCIMB 947 / NCTC 947) (Lactobacillus brevis), this protein is Serine--tRNA ligase.